We begin with the raw amino-acid sequence, 267 residues long: Tryptophan synthase alpha chain (267 aa).

Catalysis depends on proton acceptor residues glutamate 49 and aspartate 60.

The protein belongs to the TrpA family. In terms of assembly, tetramer of two alpha and two beta chains.

The enzyme catalyses (1S,2R)-1-C-(indol-3-yl)glycerol 3-phosphate + L-serine = D-glyceraldehyde 3-phosphate + L-tryptophan + H2O. It functions in the pathway amino-acid biosynthesis; L-tryptophan biosynthesis; L-tryptophan from chorismate: step 5/5. Its function is as follows. The alpha subunit is responsible for the aldol cleavage of indoleglycerol phosphate to indole and glyceraldehyde 3-phosphate. In Cyanothece sp. (strain PCC 7425 / ATCC 29141), this protein is Tryptophan synthase alpha chain.